The chain runs to 413 residues: Serine hydroxymethyltransferase (413 aa).

Residues Leu-117 and 121–123 (GHL) each bind (6S)-5,6,7,8-tetrahydrofolate. Lys-226 is subject to N6-(pyridoxal phosphate)lysine. Residues Glu-239 and 349–351 (SPF) contribute to the (6S)-5,6,7,8-tetrahydrofolate site.

The protein belongs to the SHMT family. Homodimer. It depends on pyridoxal 5'-phosphate as a cofactor.

Its subcellular location is the cytoplasm. The enzyme catalyses (6R)-5,10-methylene-5,6,7,8-tetrahydrofolate + glycine + H2O = (6S)-5,6,7,8-tetrahydrofolate + L-serine. Its pathway is one-carbon metabolism; tetrahydrofolate interconversion. It participates in amino-acid biosynthesis; glycine biosynthesis; glycine from L-serine: step 1/1. Functionally, catalyzes the reversible interconversion of serine and glycine with tetrahydrofolate (THF) serving as the one-carbon carrier. This reaction serves as the major source of one-carbon groups required for the biosynthesis of purines, thymidylate, methionine, and other important biomolecules. Also exhibits THF-independent aldolase activity toward beta-hydroxyamino acids, producing glycine and aldehydes, via a retro-aldol mechanism. The polypeptide is Serine hydroxymethyltransferase (Bacillus anthracis (strain A0248)).